Here is a 317-residue protein sequence, read N- to C-terminus: Porphobilinogen deaminase (317 aa).

Cys245 carries the S-(dipyrrolylmethanemethyl)cysteine modification.

Belongs to the HMBS family. In terms of assembly, monomer. Requires dipyrromethane as cofactor.

The enzyme catalyses 4 porphobilinogen + H2O = hydroxymethylbilane + 4 NH4(+). It participates in porphyrin-containing compound metabolism; protoporphyrin-IX biosynthesis; coproporphyrinogen-III from 5-aminolevulinate: step 2/4. Its pathway is porphyrin-containing compound metabolism; chlorophyll biosynthesis. Tetrapolymerization of the monopyrrole PBG into the hydroxymethylbilane pre-uroporphyrinogen in several discrete steps. This Prochlorococcus marinus (strain MIT 9303) protein is Porphobilinogen deaminase.